Here is a 488-residue protein sequence, read N- to C-terminus: Cobyric acid synthase (488 aa).

Positions V252–Q440 constitute a GATase cobBQ-type domain. The active-site Nucleophile is C334. The active site involves H432.

The protein belongs to the CobB/CobQ family. CobQ subfamily.

Its pathway is cofactor biosynthesis; adenosylcobalamin biosynthesis. Catalyzes amidations at positions B, D, E, and G on adenosylcobyrinic A,C-diamide. NH(2) groups are provided by glutamine, and one molecule of ATP is hydrogenolyzed for each amidation. This chain is Cobyric acid synthase, found in Methylorubrum populi (strain ATCC BAA-705 / NCIMB 13946 / BJ001) (Methylobacterium populi).